The chain runs to 87 residues: Small ribosomal subunit protein bS20 (87 aa).

A disordered region spans residues 1–26 (MANTKSALKRIRQTATRTARNRAVTS). A compositionally biased stretch (low complexity) spans 13-23 (QTATRTARNRA).

This sequence belongs to the bacterial ribosomal protein bS20 family.

In terms of biological role, binds directly to 16S ribosomal RNA. The chain is Small ribosomal subunit protein bS20 from Akkermansia muciniphila (strain ATCC BAA-835 / DSM 22959 / JCM 33894 / BCRC 81048 / CCUG 64013 / CIP 107961 / Muc).